We begin with the raw amino-acid sequence, 162 residues long: 6,7-dimethyl-8-ribityllumazine synthase (162 aa).

Residues Phe23, Ala61–Glu63, and Ala85–Ile87 each bind 5-amino-6-(D-ribitylamino)uracil. (2S)-2-hydroxy-3-oxobutyl phosphate is bound at residue Asp90–Thr91. His93 acts as the Proton donor in catalysis. Phe118 contributes to the 5-amino-6-(D-ribitylamino)uracil binding site. Arg132 is a (2S)-2-hydroxy-3-oxobutyl phosphate binding site.

Belongs to the DMRL synthase family.

The enzyme catalyses (2S)-2-hydroxy-3-oxobutyl phosphate + 5-amino-6-(D-ribitylamino)uracil = 6,7-dimethyl-8-(1-D-ribityl)lumazine + phosphate + 2 H2O + H(+). The protein operates within cofactor biosynthesis; riboflavin biosynthesis; riboflavin from 2-hydroxy-3-oxobutyl phosphate and 5-amino-6-(D-ribitylamino)uracil: step 1/2. Catalyzes the formation of 6,7-dimethyl-8-ribityllumazine by condensation of 5-amino-6-(D-ribitylamino)uracil with 3,4-dihydroxy-2-butanone 4-phosphate. This is the penultimate step in the biosynthesis of riboflavin. The protein is 6,7-dimethyl-8-ribityllumazine synthase of Synechococcus sp. (strain CC9902).